Consider the following 464-residue polypeptide: ATP synthase subunit beta (464 aa).

148 to 155 (GGAGVGKT) serves as a coordination point for ATP.

The protein belongs to the ATPase alpha/beta chains family. F-type ATPases have 2 components, CF(1) - the catalytic core - and CF(0) - the membrane proton channel. CF(1) has five subunits: alpha(3), beta(3), gamma(1), delta(1), epsilon(1). CF(0) has three main subunits: a(1), b(2) and c(9-12). The alpha and beta chains form an alternating ring which encloses part of the gamma chain. CF(1) is attached to CF(0) by a central stalk formed by the gamma and epsilon chains, while a peripheral stalk is formed by the delta and b chains.

It localises to the cell inner membrane. The catalysed reaction is ATP + H2O + 4 H(+)(in) = ADP + phosphate + 5 H(+)(out). In terms of biological role, produces ATP from ADP in the presence of a proton gradient across the membrane. The catalytic sites are hosted primarily by the beta subunits. This chain is ATP synthase subunit beta, found in Marinobacter nauticus (strain ATCC 700491 / DSM 11845 / VT8) (Marinobacter aquaeolei).